A 315-amino-acid chain; its full sequence is MQEKNVFNWLHKDLLDIDQLSQTDIFNILNTASSLDETNSRVIKKLPTLRGKNIILFFAEPSTRTKVSFEIAGKRLSADTIGVNASSSSIQKGESLKDTALTLQAMSPDVIVLRHSSSGAALFLADLLECSVINAGDGWHAHPTQALLDVFSLWKVWGNHFHGKEVLIVGDTAHSRVCRSNVTLLNLMGVKVRLCSPRTLLPSGVEHWPVEIYTDLHQAICGVDAVICLRVQLERHKKSFFPSIEEYAKRFCLTPKHLMSAKTEAKVLHPGPFLRGVDLASSLIETPQSLIFDQVSAGIAIRMAILFLFLTCNDL.

2 residues coordinate carbamoyl phosphate: R64 and T65. K92 contacts L-aspartate. Carbamoyl phosphate contacts are provided by R114, H142, and Q145. 2 residues coordinate L-aspartate: R176 and R230. Residues G271 and P272 each coordinate carbamoyl phosphate.

This sequence belongs to the aspartate/ornithine carbamoyltransferase superfamily. ATCase family. As to quaternary structure, heterododecamer (2C3:3R2) of six catalytic PyrB chains organized as two trimers (C3), and six regulatory PyrI chains organized as three dimers (R2).

It carries out the reaction carbamoyl phosphate + L-aspartate = N-carbamoyl-L-aspartate + phosphate + H(+). Its pathway is pyrimidine metabolism; UMP biosynthesis via de novo pathway; (S)-dihydroorotate from bicarbonate: step 2/3. Its function is as follows. Catalyzes the condensation of carbamoyl phosphate and aspartate to form carbamoyl aspartate and inorganic phosphate, the committed step in the de novo pyrimidine nucleotide biosynthesis pathway. The chain is Aspartate carbamoyltransferase catalytic subunit from Lawsonia intracellularis (strain PHE/MN1-00).